Here is a 103-residue protein sequence, read N- to C-terminus: Large ribosomal subunit protein bL21 (103 aa).

This sequence belongs to the bacterial ribosomal protein bL21 family. As to quaternary structure, part of the 50S ribosomal subunit. Contacts protein L20.

Its function is as follows. This protein binds to 23S rRNA in the presence of protein L20. This is Large ribosomal subunit protein bL21 from Hahella chejuensis (strain KCTC 2396).